The chain runs to 280 residues: NAD kinase (280 aa).

The Proton acceptor role is filled by Asp67. NAD(+) contacts are provided by residues 67–68, Arg72, 138–139, Asp167, Ala175, 178–183, and Gln237; these read DG, ND, and TAYSLS.

Belongs to the NAD kinase family. The cofactor is a divalent metal cation.

It localises to the cytoplasm. The catalysed reaction is NAD(+) + ATP = ADP + NADP(+) + H(+). Involved in the regulation of the intracellular balance of NAD and NADP, and is a key enzyme in the biosynthesis of NADP. Catalyzes specifically the phosphorylation on 2'-hydroxyl of the adenosine moiety of NAD to yield NADP. This chain is NAD kinase, found in Aeropyrum pernix (strain ATCC 700893 / DSM 11879 / JCM 9820 / NBRC 100138 / K1).